The following is a 956-amino-acid chain: Zinc protease PQQL-like (956 aa).

Residue Met-1 is modified to N-acetylmethionine. Position 85 (His-85) interacts with Zn(2+). Glu-88 serves as the catalytic Proton acceptor. His-89 provides a ligand contact to Zn(2+). Glu-165 is an active-site residue. Zn(2+) is bound at residue Glu-172.

Belongs to the peptidase M16 family. The cofactor is Zn(2+).

This chain is Zinc protease PQQL-like, found in Arabidopsis thaliana (Mouse-ear cress).